A 546-amino-acid polypeptide reads, in one-letter code: Probable protein kinase UbiB (546 aa).

Positions 124–502 constitute a Protein kinase domain; the sequence is DFSVEPLASA…HVRQGQSRYL (379 aa). ATP contacts are provided by residues 130–138 and Lys153; that span reads LASASIAQV. Asp288 acts as the Proton acceptor in catalysis. Transmembrane regions (helical) follow at residues 501–521 and 522–542; these read YLFGIGAVLLLSGTLLFIHRP and EWGMMPGWLMAGGVVTWLIGW.

It belongs to the ABC1 family. UbiB subfamily.

It is found in the cell inner membrane. The protein operates within cofactor biosynthesis; ubiquinone biosynthesis [regulation]. Functionally, is probably a protein kinase regulator of UbiI activity which is involved in aerobic coenzyme Q (ubiquinone) biosynthesis. The protein is Probable protein kinase UbiB of Klebsiella pneumoniae subsp. pneumoniae (strain ATCC 700721 / MGH 78578).